The following is a 196-amino-acid chain: HTH-type transcriptional regulator BetI (196 aa).

An HTH tetR-type domain is found at 8–68 (PIRRSQLIAA…ATMRHLMQAL (61 aa)). Positions 31–50 (SIAYIARLAGVSNGIISHYF) form a DNA-binding region, H-T-H motif.

The protein operates within amine and polyamine biosynthesis; betaine biosynthesis via choline pathway [regulation]. Its function is as follows. Repressor involved in the biosynthesis of the osmoprotectant glycine betaine. It represses transcription of the choline transporter BetT and the genes of BetAB involved in the synthesis of glycine betaine. The chain is HTH-type transcriptional regulator BetI from Ectopseudomonas mendocina (strain ymp) (Pseudomonas mendocina).